We begin with the raw amino-acid sequence, 193 residues long: T-cell receptor-associated transmembrane adapter 1 (193 aa).

Topologically, residues 1–10 are extracellular; sequence MSGNAECHFS. A helical; Signal-anchor for type III membrane protein membrane pass occupies residues 11 to 31; sequence IWAILAFLGLALTISLIFNIF. At 32 to 193 the chain is on the cytoplasmic side; it reads HCVEKQRQEK…LHSLDYDLAQ (162 aa). Phosphoserine is present on Ser-46. Tyr-80 carries the phosphotyrosine modification. Residues 80–83 are interaction with PIK3R1; the sequence is YEQM. The segment at 116-166 is disordered; sequence NEGKRRKPRKQKSHLSDKDEEGQMHAKDISLSKTTLVDSYPPESEAIEENI. Over residues 119-128 the composition is skewed to basic residues; that stretch reads KRRKPRKQKS. Positions 129-145 are enriched in basic and acidic residues; sequence HLSDKDEEGQMHAKDIS.

Homodimer; disulfide-linked. Interacts with CD3Z. When phosphorylated, interacts with PIK3R1. Phosphorylated on tyrosines upon TCR activation.

The protein localises to the cell membrane. Its function is as follows. Stabilizes the TCR (T-cell antigen receptor)/CD3 complex at the surface of T-cells. This is T-cell receptor-associated transmembrane adapter 1 (TRAT1) from Bos taurus (Bovine).